A 195-amino-acid polypeptide reads, in one-letter code: uncharacterized protein (195 aa).

Residues 175-195 (ILGKISGFFGSIVSTIFSLFG) form a helical membrane-spanning segment.

The protein localises to the membrane. This is an uncharacterized protein from Methanocaldococcus jannaschii (strain ATCC 43067 / DSM 2661 / JAL-1 / JCM 10045 / NBRC 100440) (Methanococcus jannaschii).